A 686-amino-acid chain; its full sequence is Amphiphysin (686 aa).

Coiled-coil stretches lie at residues 10–83 and 144–191; these read AKNV…SLHE and DYDS…QEEL. Residues 24–240 enclose the BAR domain; sequence VLQKLGKADE…MTKLGDQHAD (217 aa). Disordered regions lie at residues 244–314, 421–441, and 483–597; these read SIQG…PTKE, AETE…ATAA, and VEEA…AGAV. A Phosphoserine modification is found at S252. The residue at position 260 (T260) is a Phosphothreonine. Residues 261 to 274 are compositionally biased toward pro residues; that stretch reads PSPPEEPSPLPSPT. 4 positions are modified to phosphoserine: S262, S268, S272, and S276. Position 280 is a phosphothreonine (T280). A compositionally biased stretch (low complexity) spans 424 to 441; the sequence is EQALPTEPQAEEPPATAA. Position 500 is a phosphoserine (S500). The span at 541 to 562 shows a compositional bias: basic and acidic residues; it reads SNHEGEGEHQETATGTEPREAA. The region spanning 613–686 is the SH3 domain; it reads GFLYKVETLH…FPENFTRRLE (74 aa). S629 is modified (phosphoserine).

As to quaternary structure, heterodimer with BIN1. Binds SH3GLB1. Interacts with REPS1 and SGIP1. Binds AP2A2. Interacts with AP2B1. Interacts with DNM1 and SYNJ1.

The protein localises to the cytoplasmic vesicle. It localises to the secretory vesicle. Its subcellular location is the synaptic vesicle membrane. It is found in the cytoplasm. The protein resides in the cytoskeleton. In terms of biological role, may participate in mechanisms of regulated exocytosis in synapses and certain endocrine cell types. May control the properties of the membrane associated cytoskeleton. This Mus musculus (Mouse) protein is Amphiphysin (Amph).